We begin with the raw amino-acid sequence, 915 residues long: Mitogen-activated protein kinase kinae kinase MST11 (915 aa).

Disordered stretches follow at residues 1-65 (MAML…PKHW), 134-171 (KKRNRDSFAGHESMYTPVSESPSKPFHSSSRVMPNPSV), and 183-249 (GMAY…TRTD). The segment covering 26 to 45 (AQASYPPSRRAPAVPPASQS) has biased composition (low complexity). Residues 65 to 128 (WDEDKVCEYL…FLSIKKLRTK (64 aa)) form the SAM domain. Composition is skewed to low complexity over residues 152-163 (SESPSKPFHSSS) and 188-203 (PSRPTTSSRPTSPLPS). In terms of domain architecture, Ras-associating spans 263 to 353 (NQDVIRVIST…NRLILRRVPA (91 aa)). In terms of domain architecture, Protein kinase spans 641–911 (WMKGALIGQG…ADDLMLSPFL (271 aa)). Residues 647–655 (IGQGSFGCV) and Lys-670 contribute to the ATP site.

Belongs to the protein kinase superfamily. STE Ser/Thr protein kinase family. MAP kinase kinase kinase subfamily. In terms of assembly, interacts with the adapter protein MST50.

It catalyses the reaction L-seryl-[protein] + ATP = O-phospho-L-seryl-[protein] + ADP + H(+). The enzyme catalyses L-threonyl-[protein] + ATP = O-phospho-L-threonyl-[protein] + ADP + H(+). Mitogen-activated protein kinase kinase kinase; part of the MST11-MST7-PMK1 MAP kinase (MAPK) cascade that is essential for appressorium formation, penetration and invasive growth. The MST11-MST7-PMK1 MAP kinase cascade transduces signals from the cell surface sensors MDB2 and SHO1 that recognize various surface signals such as surface hydrophobicity, cutin monomers, and rice leaf waxes. MST11 acts as the upstream MAPKKK that directly phosphorylates MAPKK MST7. MST11 but not MST7 may also be involved in the OSM1 MAPK pathway in response to osmotic stresses. In Pyricularia oryzae (strain 70-15 / ATCC MYA-4617 / FGSC 8958) (Rice blast fungus), this protein is Mitogen-activated protein kinase kinae kinase MST11.